A 317-amino-acid polypeptide reads, in one-letter code: Melanocyte-stimulating hormone receptor (317 aa).

At 1–37 (MAVQGSQRRLLGSLNSTPTAIPQLGLAANQTGARCLE) the chain is on the extracellular side. Residue asparagine 29 is glycosylated (N-linked (GlcNAc...) asparagine). The chain crosses the membrane as a helical span at residues 38–63 (VSIPDGLFLSLGLVSLVENMLVVATI). The Cytoplasmic segment spans residues 64 to 72 (AKNRNLHSP). Residues 73-93 (MYCFICCLALSDLLVSGSNVL) form a helical membrane-spanning segment. The Extracellular segment spans residues 94-118 (ETAVILLLEAGALVARAAVLQQVDN). Residues 119 to 140 (VIDVITCSSMLSSLCFLGAIAV) form a helical membrane-spanning segment. Topologically, residues 141-163 (DRYISIFYALRYHSIVTLPRARR) are cytoplasmic. A helical transmembrane segment spans residues 164–183 (AIAAIWVASVLFSTLFIAYC). Topologically, residues 184-191 (DHTAVLLC) are extracellular. The helical transmembrane segment at 192–211 (LVVFFLAVLVLMAVLYVHML) threads the bilayer. Over 212-240 (ARACQHAQGIARLHKRQRPVHQGFGLKGA) the chain is Cytoplasmic. The helical transmembrane segment at 241 to 266 (VTLTILLGIFFLCWGPFFLHLTLIVL) threads the bilayer. Topologically, residues 267 to 279 (CPEHPTCGCIFKN) are extracellular. A helical transmembrane segment spans residues 280–300 (FNLFLALIICNAIIDPLIYAF). Over 301 to 317 (HSQELRRTLKEVLTCSW) the chain is Cytoplasmic. Cysteine 315 carries the S-palmitoyl cysteine lipid modification.

This sequence belongs to the G-protein coupled receptor 1 family. Interacts with MGRN1, but does not undergo MGRN1-mediated ubiquitination; this interaction competes with GNAS-binding and thus inhibits agonist-induced cAMP production. Interacts with OPN3; the interaction results in a decrease in MC1R-mediated cAMP signaling and ultimately a decrease in melanin production in melanocytes.

Its subcellular location is the cell membrane. Functionally, receptor for MSH (alpha, beta and gamma) and ACTH. The activity of this receptor is mediated by G proteins which activate adenylate cyclase. Mediates melanogenesis, the production of eumelanin (black/brown) and phaeomelanin (red/yellow), via regulation of cAMP signaling in melanocytes. The sequence is that of Melanocyte-stimulating hormone receptor (MC1R) from Pan troglodytes (Chimpanzee).